The following is a 378-amino-acid chain: Queuine tRNA-ribosyltransferase (378 aa).

Aspartate 89 serves as the catalytic Proton acceptor. Residues 89 to 93 (DSGGF), aspartate 143, glutamine 194, and glycine 221 contribute to the substrate site. The segment at 252 to 258 (GVGTPAN) is RNA binding. Aspartate 271 serves as the catalytic Nucleophile. Zn(2+) is bound by residues cysteine 309, cysteine 311, cysteine 314, and histidine 340.

It belongs to the queuine tRNA-ribosyltransferase family. In terms of assembly, homodimer. Within each dimer, one monomer is responsible for RNA recognition and catalysis, while the other monomer binds to the replacement base PreQ1. Zn(2+) is required as a cofactor.

It carries out the reaction 7-aminomethyl-7-carbaguanine + guanosine(34) in tRNA = 7-aminomethyl-7-carbaguanosine(34) in tRNA + guanine. The protein operates within tRNA modification; tRNA-queuosine biosynthesis. Its function is as follows. Catalyzes the base-exchange of a guanine (G) residue with the queuine precursor 7-aminomethyl-7-deazaguanine (PreQ1) at position 34 (anticodon wobble position) in tRNAs with GU(N) anticodons (tRNA-Asp, -Asn, -His and -Tyr). Catalysis occurs through a double-displacement mechanism. The nucleophile active site attacks the C1' of nucleotide 34 to detach the guanine base from the RNA, forming a covalent enzyme-RNA intermediate. The proton acceptor active site deprotonates the incoming PreQ1, allowing a nucleophilic attack on the C1' of the ribose to form the product. After dissociation, two additional enzymatic reactions on the tRNA convert PreQ1 to queuine (Q), resulting in the hypermodified nucleoside queuosine (7-(((4,5-cis-dihydroxy-2-cyclopenten-1-yl)amino)methyl)-7-deazaguanosine). This Lachnospira eligens (strain ATCC 27750 / DSM 3376 / VPI C15-48 / C15-B4) (Eubacterium eligens) protein is Queuine tRNA-ribosyltransferase.